We begin with the raw amino-acid sequence, 327 residues long: Microtubule-associated protein RP/EB family member 2 (327 aa).

The tract at residues 1–21 is disordered; sequence MPGPTQTLSPNGENNNDIIQD. Residue P2 is modified to N-acetylalanine. A Phosphoserine modification is found at S9. A Calponin-homology (CH) domain is found at 57–159; it reads TMSRHDIIAW…FIQWFKKFYD (103 aa). The residue at position 167 (Y167) is a Phosphotyrosine. 2 disordered regions span residues 171–240 and 299–327; these read EARQ…DKDL and ASEE…QEEY. The segment at 187-327 is DCTN1-binding; that stretch reads QIFNLPKKSH…EQQPPQQEEY (141 aa). The segment covering 200-234 has biased composition (low complexity); that stretch reads SPTAGAAKSSPAAKPGSTPSRPSSAKRASSSGSAS. A phosphoserine mark is found at S219 and S236. One can recognise an EB1 C-terminal domain in the interval 236 to 306; it reads SDKDLETQVI…LYASEEHEGH (71 aa). Positions 259 to 302 are APC-binding; it reads EGVEKERDFYFGKLREIELLCQEHGQENDDLVQRLMDILYASEE. Positions 300–317 are enriched in basic and acidic residues; the sequence is SEEHEGHTEEPEAEEQAH. Residues 318-327 are compositionally biased toward low complexity; sequence EQQPPQQEEY.

The protein belongs to the MAPRE family. In terms of assembly, interacts with DCTN1. Interacts with APC (via C-terminal). Interacts with monomeric and polymerized tubulin. Interacts with SLAIN1. Interacts (via the N-terminal region) with BAG1. Interacts with ASB14. Interacts with HAX1; this interaction is essential for epidermal cell migration. Post-translationally, phosphorylated at Ser-236 by CK2 leading to enhanced cell adhesion. Phosphorylated by CDK1 and AURKB during mitosis reduces the binding affinity of MAPRE2 for microtubules. Ubiquitinated in an ASB14-dependent manner; leading to proteasomal degradation. As to expression, expressed in different tumor cell lines. Up-regulated in activated B- and T-lymphocytes.

Its subcellular location is the cytoplasm. The protein localises to the cytoskeleton. Functionally, adapter protein that is involved in microtubule polymerization, and spindle function by stabilizing microtubules and anchoring them at centrosomes. Therefore, ensures mitotic progression and genome stability. Acts as a central regulator of microtubule reorganization in apico-basal epithelial differentiation. Plays a role during oocyte meiosis by regulating microtubule dynamics. Participates in neurite growth by interacting with plexin B3/PLXNB3 and microtubule reorganization during apico-basal epithelial differentiation. Also plays an essential role for cell migration and focal adhesion dynamics. Mechanistically, recruits HAX1 to microtubules in order to regulate focal adhesion dynamics. The polypeptide is Microtubule-associated protein RP/EB family member 2 (MAPRE2) (Homo sapiens (Human)).